The chain runs to 312 residues: Ornithine carbamoyltransferase (312 aa).

Residues 59-62 (STRT), Q86, R110, and 137-140 (HPCQ) each bind carbamoyl phosphate. L-ornithine contacts are provided by residues N167, D231, and 235 to 236 (SM). Carbamoyl phosphate contacts are provided by C271 and R299.

Belongs to the aspartate/ornithine carbamoyltransferase superfamily. OTCase family.

It localises to the cytoplasm. The catalysed reaction is carbamoyl phosphate + L-ornithine = L-citrulline + phosphate + H(+). It functions in the pathway amino-acid biosynthesis; L-arginine biosynthesis; L-arginine from L-ornithine and carbamoyl phosphate: step 1/3. Reversibly catalyzes the transfer of the carbamoyl group from carbamoyl phosphate (CP) to the N(epsilon) atom of ornithine (ORN) to produce L-citrulline. The chain is Ornithine carbamoyltransferase from Methanopyrus kandleri (strain AV19 / DSM 6324 / JCM 9639 / NBRC 100938).